The following is a 371-amino-acid chain: Anhydro-N-acetylmuramic acid kinase (371 aa).

An ATP-binding site is contributed by Gly-15–Asp-22.

This sequence belongs to the anhydro-N-acetylmuramic acid kinase family.

The enzyme catalyses 1,6-anhydro-N-acetyl-beta-muramate + ATP + H2O = N-acetyl-D-muramate 6-phosphate + ADP + H(+). The protein operates within amino-sugar metabolism; 1,6-anhydro-N-acetylmuramate degradation. Its pathway is cell wall biogenesis; peptidoglycan recycling. Catalyzes the specific phosphorylation of 1,6-anhydro-N-acetylmuramic acid (anhMurNAc) with the simultaneous cleavage of the 1,6-anhydro ring, generating MurNAc-6-P. Is required for the utilization of anhMurNAc either imported from the medium or derived from its own cell wall murein, and thus plays a role in cell wall recycling. The polypeptide is Anhydro-N-acetylmuramic acid kinase (Cereibacter sphaeroides (strain ATCC 17023 / DSM 158 / JCM 6121 / CCUG 31486 / LMG 2827 / NBRC 12203 / NCIMB 8253 / ATH 2.4.1.) (Rhodobacter sphaeroides)).